The following is a 216-amino-acid chain: Cytochrome c biogenesis ATP-binding export protein CcmA (216 aa).

The region spanning 11–216 (VSASKLTCIR…RKIRLDYRFV (206 aa)) is the ABC transporter domain. Position 43-50 (43-50 (GPNGAGKT)) interacts with ATP.

Belongs to the ABC transporter superfamily. CcmA exporter (TC 3.A.1.107) family. The complex is composed of two ATP-binding proteins (CcmA) and two transmembrane proteins (CcmB).

Its subcellular location is the cell inner membrane. It carries out the reaction heme b(in) + ATP + H2O = heme b(out) + ADP + phosphate + H(+). Part of the ABC transporter complex CcmAB involved in the biogenesis of c-type cytochromes; once thought to export heme, this seems not to be the case, but its exact role is uncertain. Responsible for energy coupling to the transport system. This is Cytochrome c biogenesis ATP-binding export protein CcmA from Shewanella sp. (strain MR-7).